A 353-amino-acid polypeptide reads, in one-letter code: Heat-inducible transcription repressor HrcA (353 aa).

Belongs to the HrcA family.

Negative regulator of class I heat shock genes (grpE-dnaK-dnaJ and groELS operons). Prevents heat-shock induction of these operons. The protein is Heat-inducible transcription repressor HrcA of Synechococcus elongatus (strain ATCC 33912 / PCC 7942 / FACHB-805) (Anacystis nidulans R2).